The primary structure comprises 109 residues: NADH-quinone oxidoreductase subunit K (109 aa).

3 helical membrane passes run 12–32 (LNHY…GLFM), 40–60 (ILMS…AFSV), and 72–92 (IIIL…LLIY).

Belongs to the complex I subunit 4L family. In terms of assembly, NDH-1 is composed of 14 different subunits. Subunits NuoA, H, J, K, L, M, N constitute the membrane sector of the complex.

The protein resides in the cell inner membrane. It catalyses the reaction a quinone + NADH + 5 H(+)(in) = a quinol + NAD(+) + 4 H(+)(out). NDH-1 shuttles electrons from NADH, via FMN and iron-sulfur (Fe-S) centers, to quinones in the respiratory chain. The immediate electron acceptor for the enzyme in this species is believed to be ubiquinone. Couples the redox reaction to proton translocation (for every two electrons transferred, four hydrogen ions are translocated across the cytoplasmic membrane), and thus conserves the redox energy in a proton gradient. This is NADH-quinone oxidoreductase subunit K from Rickettsia bellii (strain RML369-C).